Here is a 508-residue protein sequence, read N- to C-terminus: Steroid 17-alpha-hydroxylase/17,20 lyase (508 aa).

C445 provides a ligand contact to heme.

This sequence belongs to the cytochrome P450 family. It depends on heme as a cofactor.

It localises to the membrane. The catalysed reaction is a C21-steroid + reduced [NADPH--hemoprotein reductase] + O2 = a 17alpha-hydroxy-C21-steroid + oxidized [NADPH--hemoprotein reductase] + H2O + H(+). It catalyses the reaction 17alpha-hydroxyprogesterone + reduced [NADPH--hemoprotein reductase] + O2 = androst-4-ene-3,17-dione + acetate + oxidized [NADPH--hemoprotein reductase] + H2O + 2 H(+). The enzyme catalyses 17alpha-hydroxypregnenolone + reduced [NADPH--hemoprotein reductase] + O2 = 3beta-hydroxyandrost-5-en-17-one + acetate + oxidized [NADPH--hemoprotein reductase] + H2O + 2 H(+). Its pathway is lipid metabolism; steroid biosynthesis. In terms of biological role, conversion of pregnenolone and progesterone to their 17-alpha-hydroxylated products and subsequently to dehydroepiandrosterone (DHEA) and androstenedione. Catalyzes both the 17-alpha-hydroxylation and the 17,20-lyase reaction. The protein is Steroid 17-alpha-hydroxylase/17,20 lyase (CYP17A1) of Gallus gallus (Chicken).